Reading from the N-terminus, the 76-residue chain is Small ribosomal subunit protein bS16 (76 aa).

Belongs to the bacterial ribosomal protein bS16 family.

The chain is Small ribosomal subunit protein bS16 from Sulfurovum sp. (strain NBC37-1).